Consider the following 89-residue polypeptide: Small ribosomal subunit protein uS15 (89 aa).

The protein belongs to the universal ribosomal protein uS15 family. As to quaternary structure, part of the 30S ribosomal subunit. Forms a bridge to the 50S subunit in the 70S ribosome, contacting the 23S rRNA.

One of the primary rRNA binding proteins, it binds directly to 16S rRNA where it helps nucleate assembly of the platform of the 30S subunit by binding and bridging several RNA helices of the 16S rRNA. Functionally, forms an intersubunit bridge (bridge B4) with the 23S rRNA of the 50S subunit in the ribosome. This chain is Small ribosomal subunit protein uS15, found in Enterobacter sp. (strain 638).